Consider the following 321-residue polypeptide: Sideroflexin-3 (321 aa).

Residue M1 is modified to N-acetylmethionine. Transmembrane regions (helical) follow at residues 146–164 (LGMA…ALGL), 174–194 (LVGR…NIPL), 226–246 (FQVV…PPVI), and 266–286 (LQMG…CALF).

Belongs to the sideroflexin family.

It localises to the mitochondrion membrane. It carries out the reaction L-serine(in) = L-serine(out). In terms of biological role, mitochondrial serine transporter that mediates transport of serine into mitochondria, an important step of the one-carbon metabolism pathway. Mitochondrial serine is converted to glycine and formate, which then exits to the cytosol where it is used to generate the charged folates that serve as one-carbon donors. This is Sideroflexin-3 (SFXN3) from Bos taurus (Bovine).